The following is a 467-amino-acid chain: 2-succinylbenzoate--CoA ligase (467 aa).

Belongs to the ATP-dependent AMP-binding enzyme family. MenE subfamily.

It carries out the reaction 2-succinylbenzoate + ATP + CoA = 2-succinylbenzoyl-CoA + AMP + diphosphate. The protein operates within quinol/quinone metabolism; 1,4-dihydroxy-2-naphthoate biosynthesis; 1,4-dihydroxy-2-naphthoate from chorismate: step 5/7. Its pathway is quinol/quinone metabolism; menaquinone biosynthesis. In terms of biological role, converts 2-succinylbenzoate (OSB) to 2-succinylbenzoyl-CoA (OSB-CoA). The polypeptide is 2-succinylbenzoate--CoA ligase (Listeria innocua serovar 6a (strain ATCC BAA-680 / CLIP 11262)).